A 433-amino-acid chain; its full sequence is Enolase (433 aa).

Glutamine 167 provides a ligand contact to (2R)-2-phosphoglycerate. The active-site Proton donor is the glutamate 209. 3 residues coordinate Mg(2+): aspartate 246, glutamate 291, and aspartate 318. Residues lysine 343, arginine 372, serine 373, and lysine 394 each coordinate (2R)-2-phosphoglycerate. Lysine 343 functions as the Proton acceptor in the catalytic mechanism.

It belongs to the enolase family. In terms of assembly, component of the RNA degradosome, a multiprotein complex involved in RNA processing and mRNA degradation. Requires Mg(2+) as cofactor.

The protein localises to the cytoplasm. It is found in the secreted. It localises to the cell surface. The enzyme catalyses (2R)-2-phosphoglycerate = phosphoenolpyruvate + H2O. It participates in carbohydrate degradation; glycolysis; pyruvate from D-glyceraldehyde 3-phosphate: step 4/5. Functionally, catalyzes the reversible conversion of 2-phosphoglycerate (2-PG) into phosphoenolpyruvate (PEP). It is essential for the degradation of carbohydrates via glycolysis. This chain is Enolase, found in Aeromonas salmonicida (strain A449).